The sequence spans 644 residues: Karyogamy protein KAR9 (644 aa).

Ser-496 carries the phosphoserine modification. 2 disordered regions span residues 506-534 (SVPPLPYDETDETTLRVSRGENEKSPDSF) and 606-644 (PNSQVWVPSTRRRTRLRPPTPLSQLLSPREGRLDKTPTY). Basic and acidic residues-rich tracts occupy residues 523-534 (SRGENEKSPDSF) and 634-644 (REGRLDKTPTY).

It localises to the nucleus. The protein resides in the cytoplasm. The protein localises to the cytoskeleton. Functionally, involved in karyogamy. Component of a cortical adaptor complex that orients cytoplasmic microtubules. It may be involved in anchoring cytoplasmic microtubules to the cell cortex. The protein is Karyogamy protein KAR9 (KAR9) of Saccharomyces cerevisiae (strain ATCC 204508 / S288c) (Baker's yeast).